We begin with the raw amino-acid sequence, 257 residues long: Phosphatidylglycerol--prolipoprotein diacylglyceryl transferase (257 aa).

Helical transmembrane passes span 13–33 (IGPIDVHWYGIFMAISIAIGG), 49–69 (FLLNLLMIVVISGVVGARLMF), 88–108 (IYEGGLSWHGAVLGGFLAGLY), 123–143 (FAVLGLSIGNILVRIGNIFNQ), 152–172 (FAFGRWPAQLVGVAMGIILLI), 185–202 (GYQFWSFIFYYQLMRGLI), and 223–243 (IGFFTLTQLVTPFILILAYWM). Residue Arg136 participates in a 1,2-diacyl-sn-glycero-3-phospho-(1'-sn-glycerol) binding.

This sequence belongs to the Lgt family.

The protein localises to the cell membrane. It carries out the reaction L-cysteinyl-[prolipoprotein] + a 1,2-diacyl-sn-glycero-3-phospho-(1'-sn-glycerol) = an S-1,2-diacyl-sn-glyceryl-L-cysteinyl-[prolipoprotein] + sn-glycerol 1-phosphate + H(+). The protein operates within protein modification; lipoprotein biosynthesis (diacylglyceryl transfer). Functionally, catalyzes the transfer of the diacylglyceryl group from phosphatidylglycerol to the sulfhydryl group of the N-terminal cysteine of a prolipoprotein, the first step in the formation of mature lipoproteins. The polypeptide is Phosphatidylglycerol--prolipoprotein diacylglyceryl transferase (Thermoanaerobacter pseudethanolicus (strain ATCC 33223 / 39E) (Clostridium thermohydrosulfuricum)).